The following is a 430-amino-acid chain: Asparagine--tRNA ligase (430 aa).

Belongs to the class-II aminoacyl-tRNA synthetase family.

It is found in the cytoplasm. It catalyses the reaction tRNA(Asn) + L-asparagine + ATP = L-asparaginyl-tRNA(Asn) + AMP + diphosphate + H(+). This is Asparagine--tRNA ligase from Thermococcus gammatolerans (strain DSM 15229 / JCM 11827 / EJ3).